We begin with the raw amino-acid sequence, 293 residues long: Fructose-bisphosphate aldolase (293 aa).

Residue serine 50 coordinates D-glyceraldehyde 3-phosphate. Aspartate 85 (proton donor) is an active-site residue. Zn(2+)-binding residues include histidine 86, aspartate 106, glutamate 136, and histidine 178. Glycine 179 provides a ligand contact to dihydroxyacetone phosphate. Histidine 208 is a binding site for Zn(2+). Residues 209–211 and 230–233 contribute to the dihydroxyacetone phosphate site; these read GGS and NVNT.

Belongs to the class II fructose-bisphosphate aldolase family. The cofactor is Zn(2+).

It catalyses the reaction beta-D-fructose 1,6-bisphosphate = D-glyceraldehyde 3-phosphate + dihydroxyacetone phosphate. Its pathway is carbohydrate degradation; glycolysis; D-glyceraldehyde 3-phosphate and glycerone phosphate from D-glucose: step 4/4. Functionally, catalyzes the aldol condensation of dihydroxyacetone phosphate (DHAP or glycerone-phosphate) with glyceraldehyde 3-phosphate (G3P) to form fructose 1,6-bisphosphate (FBP) in gluconeogenesis and the reverse reaction in glycolysis. The polypeptide is Fructose-bisphosphate aldolase (fba) (Streptococcus pyogenes serotype M6 (strain ATCC BAA-946 / MGAS10394)).